A 67-amino-acid chain; its full sequence is DNA-directed RNA polymerase subunit omega (67 aa).

It belongs to the RNA polymerase subunit omega family. As to quaternary structure, the RNAP catalytic core consists of 2 alpha, 1 beta, 1 beta' and 1 omega subunit. When a sigma factor is associated with the core the holoenzyme is formed, which can initiate transcription.

It carries out the reaction RNA(n) + a ribonucleoside 5'-triphosphate = RNA(n+1) + diphosphate. In terms of biological role, promotes RNA polymerase assembly. Latches the N- and C-terminal regions of the beta' subunit thereby facilitating its interaction with the beta and alpha subunits. The polypeptide is DNA-directed RNA polymerase subunit omega (Burkholderia ambifaria (strain ATCC BAA-244 / DSM 16087 / CCUG 44356 / LMG 19182 / AMMD) (Burkholderia cepacia (strain AMMD))).